Here is a 374-residue protein sequence, read N- to C-terminus: tRNA-specific 2-thiouridylase MnmA (374 aa).

ATP contacts are provided by residues 12–19 (GMSGGVDS) and M38. Residues 98–100 (NPD) are interaction with target base in tRNA. The active-site Nucleophile is C103. Residues C103 and C202 are joined by a disulfide bond. Residue G128 coordinates ATP. The interval 152-154 (KDQ) is interaction with tRNA. The Cysteine persulfide intermediate role is filled by C202. Residues 316-317 (RY) form an interaction with tRNA region.

The protein belongs to the MnmA/TRMU family.

The protein resides in the cytoplasm. The enzyme catalyses S-sulfanyl-L-cysteinyl-[protein] + uridine(34) in tRNA + AH2 + ATP = 2-thiouridine(34) in tRNA + L-cysteinyl-[protein] + A + AMP + diphosphate + H(+). In terms of biological role, catalyzes the 2-thiolation of uridine at the wobble position (U34) of tRNA, leading to the formation of s(2)U34. This Vibrio vulnificus (strain YJ016) protein is tRNA-specific 2-thiouridylase MnmA.